Reading from the N-terminus, the 430-residue chain is Adenylosuccinate synthetase (430 aa).

GTP contacts are provided by residues 12 to 18 (GDEGKGK) and 40 to 42 (GHT). The active-site Proton acceptor is D13. The Mg(2+) site is built by D13 and G40. IMP is bound by residues 13–16 (DEGK), 38–41 (NAGH), T128, R142, Q223, T238, and R302. H41 functions as the Proton donor in the catalytic mechanism. 298 to 304 (TTTGRPR) provides a ligand contact to substrate. GTP-binding positions include R304, 330-332 (SID), and 412-414 (SVG).

Belongs to the adenylosuccinate synthetase family. In terms of assembly, homodimer. It depends on Mg(2+) as a cofactor.

The protein resides in the cytoplasm. The enzyme catalyses IMP + L-aspartate + GTP = N(6)-(1,2-dicarboxyethyl)-AMP + GDP + phosphate + 2 H(+). Its pathway is purine metabolism; AMP biosynthesis via de novo pathway; AMP from IMP: step 1/2. Plays an important role in the de novo pathway of purine nucleotide biosynthesis. Catalyzes the first committed step in the biosynthesis of AMP from IMP. The polypeptide is Adenylosuccinate synthetase (Streptococcus gordonii (strain Challis / ATCC 35105 / BCRC 15272 / CH1 / DL1 / V288)).